Reading from the N-terminus, the 297-residue chain is Protoheme IX farnesyltransferase (297 aa).

9 consecutive transmembrane segments (helical) span residues 26 to 46 (VTQL…PGMV), 48 to 68 (YPVL…AFAV), 96 to 116 (FHII…LWNF), 120 to 140 (LTMW…TWLL), 147 to 167 (NIVI…AAVT), 174 to 194 (AWLL…ALAL), 218 to 238 (LLNI…PYIY), 243 to 263 (IIYL…VIAL), and 276 to 296 (FRFS…DHYF).

It belongs to the UbiA prenyltransferase family. Protoheme IX farnesyltransferase subfamily.

Its subcellular location is the cell membrane. It catalyses the reaction heme b + (2E,6E)-farnesyl diphosphate + H2O = Fe(II)-heme o + diphosphate. It functions in the pathway porphyrin-containing compound metabolism; heme O biosynthesis; heme O from protoheme: step 1/1. Functionally, converts heme B (protoheme IX) to heme O by substitution of the vinyl group on carbon 2 of heme B porphyrin ring with a hydroxyethyl farnesyl side group. In Polynucleobacter asymbioticus (strain DSM 18221 / CIP 109841 / QLW-P1DMWA-1) (Polynucleobacter necessarius subsp. asymbioticus), this protein is Protoheme IX farnesyltransferase.